The following is a 100-amino-acid chain: Small ribosomal subunit protein uS14c (100 aa).

Belongs to the universal ribosomal protein uS14 family. In terms of assembly, part of the 30S ribosomal subunit.

It localises to the plastid. The protein localises to the chloroplast. Functionally, binds 16S rRNA, required for the assembly of 30S particles. This chain is Small ribosomal subunit protein uS14c, found in Pisum sativum (Garden pea).